Consider the following 220-residue polypeptide: Protein-L-isoaspartate O-methyltransferase (220 aa).

The active site involves serine 70.

It belongs to the methyltransferase superfamily. L-isoaspartyl/D-aspartyl protein methyltransferase family.

It is found in the cytoplasm. The catalysed reaction is [protein]-L-isoaspartate + S-adenosyl-L-methionine = [protein]-L-isoaspartate alpha-methyl ester + S-adenosyl-L-homocysteine. Its function is as follows. Catalyzes the methyl esterification of L-isoaspartyl residues in peptides and proteins that result from spontaneous decomposition of normal L-aspartyl and L-asparaginyl residues. It plays a role in the repair and/or degradation of damaged proteins. The sequence is that of Protein-L-isoaspartate O-methyltransferase from Halorhodospira halophila (strain DSM 244 / SL1) (Ectothiorhodospira halophila (strain DSM 244 / SL1)).